Reading from the N-terminus, the 190-residue chain is B3 domain-containing protein Os02g0764100 (190 aa).

A DNA-binding region (TF-B3) is located at residues 17–121 (FEKAVTPSDV…KLLFIDCKKN (105 aa)).

It localises to the nucleus. The sequence is that of B3 domain-containing protein Os02g0764100 from Oryza sativa subsp. japonica (Rice).